The following is a 256-amino-acid chain: Probable S-methyl-5'-thioinosine phosphorylase (256 aa).

Phosphate-binding positions include T10 and 47–48 (RH). M178 contacts substrate. T179 provides a ligand contact to phosphate. Residue 202–204 (NYA) coordinates substrate.

Belongs to the PNP/MTAP phosphorylase family. MTAP subfamily. In terms of assembly, homotrimer.

The catalysed reaction is S-methyl-5'-thioinosine + phosphate = 5-(methylsulfanyl)-alpha-D-ribose 1-phosphate + hypoxanthine. It participates in purine metabolism; purine nucleoside salvage. Catalyzes the reversible phosphorylation of S-methyl-5'-thioinosine (MTI) to hypoxanthine and 5-methylthioribose-1-phosphate. Involved in the breakdown of S-methyl-5'-thioadenosine (MTA), a major by-product of polyamine biosynthesis. Catabolism of (MTA) occurs via deamination to MTI and phosphorolysis to hypoxanthine. This Methanopyrus kandleri (strain AV19 / DSM 6324 / JCM 9639 / NBRC 100938) protein is Probable S-methyl-5'-thioinosine phosphorylase.